Reading from the N-terminus, the 259-residue chain is MTKDISKNESVVFDVQGLNLWYGEDQALKNIKMQIKKNKVTAIIGPSGCGKSTFIKTLNRMIENIPSVKTTGEIIYQGQNIFAKSVRVEELRTKVGMVFQKPNPFPKSIFANVVYGPRIHGIKDKKLLMDIAETSLRNAALWDEVKDRLHDNAYGLSGGQQQRLCIARCLAVQPDVILMDEPTSALDPIATYKIEELMESLKKHYTIAIVTHSMQQAARISDDTAFFLMGDLIEFDKTTEIFSNPKDKRTEDYITGRIG.

Positions 6–254 (SKNESVVFDV…PKDKRTEDYI (249 aa)) constitute an ABC transporter domain. 45–52 (GPSGCGKS) serves as a coordination point for ATP.

The protein belongs to the ABC transporter superfamily. Phosphate importer (TC 3.A.1.7) family. In terms of assembly, the complex is composed of two ATP-binding proteins (PstB), two transmembrane proteins (PstC and PstA) and a solute-binding protein (PstS).

Its subcellular location is the cell membrane. It catalyses the reaction phosphate(out) + ATP + H2O = ADP + 2 phosphate(in) + H(+). Functionally, part of the ABC transporter complex PstSACB involved in phosphate import. Responsible for energy coupling to the transport system. The polypeptide is Phosphate import ATP-binding protein PstB (Desulfitobacterium hafniense (strain Y51)).